The sequence spans 431 residues: uncharacterized protein (431 aa).

Disordered regions lie at residues 31 to 55 (VPASRIPEGGNVSASQPNGAHQAGV), 257 to 291 (QNGGRLSVSKDSDVYPTNGYGNGNQNRQNRSPKQD), and 365 to 431 (FQSP…HRKA). Residues 42-55 (VSASQPNGAHQAGV) show a composition bias toward polar residues. Over residues 412–425 (VEYRRGRSLRESRE) the composition is skewed to basic and acidic residues.

This is an uncharacterized protein from Arabidopsis thaliana (Mouse-ear cress).